Reading from the N-terminus, the 53-residue chain is Reg12l (53 aa).

The propeptide occupies 1–34 (RVLFRSGDQPADQPAERMQDISPEQNPLFHPDKR). 3 disulfides stabilise this stretch: C36/C50, C37/C48, and C42/C51.

This sequence belongs to the conotoxin M superfamily. As to expression, expressed by the venom duct.

The protein localises to the secreted. This chain is Reg12l, found in Conus regius (Crown cone).